The chain runs to 59 residues: Large ribosomal subunit protein bL32 (59 aa).

The disordered stretch occupies residues 1-20; sequence MAVQQNKKSRSRKGMRRSHD. Basic residues predominate over residues 7–19; the sequence is KKSRSRKGMRRSH.

It belongs to the bacterial ribosomal protein bL32 family.

This is Large ribosomal subunit protein bL32 from Nitratidesulfovibrio vulgaris (strain ATCC 29579 / DSM 644 / CCUG 34227 / NCIMB 8303 / VKM B-1760 / Hildenborough) (Desulfovibrio vulgaris).